The chain runs to 1180 residues: Lon protease homolog 2, peroxisomal (1180 aa).

The region spanning 19 to 366 (LPTCKLDSNL…ELINMINQLI (348 aa)) is the Lon N-terminal domain. The interval 416–465 (PISNRGNIKSFNNSENGNNNKTNGSGITSRRPKSNEDGGEVYDEEDDDEE) is disordered. Positions 422–444 (NIKSFNNSENGNNNKTNGSGITS) are enriched in low complexity. Positions 452–465 (DGGEVYDEEDDDEE) are enriched in acidic residues. ATP is bound at residue 667 to 674 (GPPGTGKT). The Lon proteolytic domain maps to 924-1163 (NSRVGIVNGL…YDVMKILWGE (240 aa)). Catalysis depends on residues Ser-1032 and Lys-1075.

Belongs to the peptidase S16 family.

The protein resides in the peroxisome matrix. It catalyses the reaction Hydrolysis of proteins in presence of ATP.. Functionally, ATP-dependent serine protease that mediates the selective degradation of misfolded and unassembled polypeptides in the peroxisomal matrix. Necessary for type 2 peroxisome targeting signal (PTS2)-containing protein processing and facilitates peroxisome matrix protein import. The chain is Lon protease homolog 2, peroxisomal from Scheffersomyces stipitis (strain ATCC 58785 / CBS 6054 / NBRC 10063 / NRRL Y-11545) (Yeast).